The chain runs to 144 residues: Large ribosomal subunit protein uL16 (144 aa).

It belongs to the universal ribosomal protein uL16 family. Part of the 50S ribosomal subunit.

Binds 23S rRNA and is also seen to make contacts with the A and possibly P site tRNAs. This chain is Large ribosomal subunit protein uL16, found in Bacillus cytotoxicus (strain DSM 22905 / CIP 110041 / 391-98 / NVH 391-98).